Here is a 357-residue protein sequence, read N- to C-terminus: Geranylgeranyl pyrophosphate synthase 11, chloroplastic (357 aa).

The transit peptide at 1–37 (MATTLSSSSLFIQFRGRRYNSLSSFNNLQKRTVLSLS) directs the protein to the chloroplast. Isopentenyl diphosphate contacts are provided by Lys-103, Arg-106, and His-135. Residues Asp-142 and Asp-148 each coordinate Mg(2+). Arg-153 lines the dimethylallyl diphosphate pocket. Arg-154 contributes to the isopentenyl diphosphate binding site. Dimethylallyl diphosphate contacts are provided by Lys-242, Thr-243, Gln-280, Lys-297, and Lys-307.

It belongs to the FPP/GGPP synthase family. Monomer. Mg(2+) is required as a cofactor.

It localises to the plastid. Its subcellular location is the chloroplast. It catalyses the reaction isopentenyl diphosphate + dimethylallyl diphosphate = (2E)-geranyl diphosphate + diphosphate. The catalysed reaction is isopentenyl diphosphate + (2E)-geranyl diphosphate = (2E,6E)-farnesyl diphosphate + diphosphate. The enzyme catalyses isopentenyl diphosphate + (2E,6E)-farnesyl diphosphate = (2E,6E,10E)-geranylgeranyl diphosphate + diphosphate. It functions in the pathway isoprenoid biosynthesis; farnesyl diphosphate biosynthesis; farnesyl diphosphate from geranyl diphosphate and isopentenyl diphosphate: step 1/1. It participates in isoprenoid biosynthesis; geranyl diphosphate biosynthesis; geranyl diphosphate from dimethylallyl diphosphate and isopentenyl diphosphate: step 1/1. The protein operates within isoprenoid biosynthesis; geranylgeranyl diphosphate biosynthesis; geranylgeranyl diphosphate from farnesyl diphosphate and isopentenyl diphosphate: step 1/1. In terms of biological role, catalyzes the trans-addition of the three molecules of IPP onto DMAPP to form geranylgeranyl pyrophosphate. This Arabidopsis thaliana (Mouse-ear cress) protein is Geranylgeranyl pyrophosphate synthase 11, chloroplastic.